The primary structure comprises 103 residues: MYAVFQSGGKQHRVAEGHTVRLEKIEVATGETIEFDQVLLVADGENVKVGAPLVAGGKVVATVVAHGRGEKVTIQKFRRRKHHEKKMGHRQWFTEVKITAINA.

This sequence belongs to the bacterial ribosomal protein bL21 family. Part of the 50S ribosomal subunit. Contacts protein L20.

Its function is as follows. This protein binds to 23S rRNA in the presence of protein L20. The polypeptide is Large ribosomal subunit protein bL21 (Shewanella amazonensis (strain ATCC BAA-1098 / SB2B)).